The chain runs to 125 residues: Large ribosomal subunit protein bL12 (125 aa).

This sequence belongs to the bacterial ribosomal protein bL12 family. Homodimer. Part of the ribosomal stalk of the 50S ribosomal subunit. Forms a multimeric L10(L12)X complex, where L10 forms an elongated spine to which 2 to 4 L12 dimers bind in a sequential fashion. Binds GTP-bound translation factors.

Its function is as follows. Forms part of the ribosomal stalk which helps the ribosome interact with GTP-bound translation factors. Is thus essential for accurate translation. This is Large ribosomal subunit protein bL12 from Rickettsia conorii (strain ATCC VR-613 / Malish 7).